The sequence spans 87 residues: MKTKLNELLEFPCSFTYKVMGIAEPQLVDQVVEVVQRHAPGEYTPQVKPSSKGNYHSVSITITATHIDQVETLYEELGNLELVKMVL.

It belongs to the UPF0250 family.

This Yersinia pseudotuberculosis serotype O:3 (strain YPIII) protein is UPF0250 protein YPK_3025.